A 485-amino-acid chain; its full sequence is Glutamyl-tRNA(Gln) amidotransferase subunit A (485 aa).

Active-site charge relay system residues include Lys76 and Ser151. The active-site Acyl-ester intermediate is Ser175.

It belongs to the amidase family. GatA subfamily. As to quaternary structure, heterotrimer of A, B and C subunits.

It catalyses the reaction L-glutamyl-tRNA(Gln) + L-glutamine + ATP + H2O = L-glutaminyl-tRNA(Gln) + L-glutamate + ADP + phosphate + H(+). Allows the formation of correctly charged Gln-tRNA(Gln) through the transamidation of misacylated Glu-tRNA(Gln) in organisms which lack glutaminyl-tRNA synthetase. The reaction takes place in the presence of glutamine and ATP through an activated gamma-phospho-Glu-tRNA(Gln). In Thiobacillus denitrificans (strain ATCC 25259 / T1), this protein is Glutamyl-tRNA(Gln) amidotransferase subunit A.